A 358-amino-acid chain; its full sequence is Histidinol-phosphate aminotransferase (358 aa).

Residue K211 is modified to N6-(pyridoxal phosphate)lysine.

The protein belongs to the class-II pyridoxal-phosphate-dependent aminotransferase family. Histidinol-phosphate aminotransferase subfamily. As to quaternary structure, homodimer. The cofactor is pyridoxal 5'-phosphate.

It carries out the reaction L-histidinol phosphate + 2-oxoglutarate = 3-(imidazol-4-yl)-2-oxopropyl phosphate + L-glutamate. It participates in amino-acid biosynthesis; L-histidine biosynthesis; L-histidine from 5-phospho-alpha-D-ribose 1-diphosphate: step 7/9. The sequence is that of Histidinol-phosphate aminotransferase from Blochmanniella pennsylvanica (strain BPEN).